The following is a 514-amino-acid chain: MSSQVSYLSTRGGSSNFSFEEAVLKGLANDGGLFIPSEIPQLPSGWIEAWKDKSFPEIAFEVMSLYIPRSEISADELKKLVDRSYSTFRHPETTPLKSLKNGLNVLELFHGPTFAFKDVALQFLGNLFEFFLTRKNGNKPEDERDHLTVVGATSGDTGSAAIYGLRGKKDVSVFILFPNGRVSPIQEAQMTTVTDPNVHCITVNGVFDDCQDLVKQIFGDVEFNKKHHIGAVNSINWARILSQITYYLYSYLSVYKQGKADDVRFIVPTGNFGDILAGYYAKRMGLPTKQLVIATNENDILNRFFKTGRYEKADSTQVSPSGPISAKETYSPAMDILVSSNFERYLWYLALATEAPNHTPAEASEILSRWMNEFKRDGTVTVRPEVLEAARRDFVSERVSNDETIDAIKKIYESDHYIIDPHTAVGVETGLRCLEKTKDQDITYICLSTAHPAKFDKAVNLALSSYSDYNFNTQVLPIEFDGLLDEERTCIFSGKPNIDILKQIIEVTLSREKA.

An N6-(pyridoxal phosphate)lysine modification is found at Lys-117. Pyridoxal 5'-phosphate is bound by residues Gly-270, Asn-271, Phe-272, and Asp-274. Ser-319 and Ser-321 each carry phosphoserine. Thr-449 lines the pyridoxal 5'-phosphate pocket.

This sequence belongs to the threonine synthase family. Pyridoxal 5'-phosphate is required as a cofactor.

It carries out the reaction O-phospho-L-homoserine + H2O = L-threonine + phosphate. Its pathway is amino-acid biosynthesis; L-threonine biosynthesis; L-threonine from L-aspartate: step 5/5. Functionally, catalyzes the gamma-elimination of phosphate from L-phosphohomoserine and the beta-addition of water to produce L-threonine. In Schizosaccharomyces pombe (strain 972 / ATCC 24843) (Fission yeast), this protein is Threonine synthase (thrc).